Consider the following 88-residue polypeptide: uncharacterized protein (88 aa).

Residues Met-1–Ala-88 form a disordered region. Basic and acidic residues predominate over residues Tyr-21–Asn-65.

Its function is as follows. Involved in osmoadaptation. This is an uncharacterized protein from Emericella nidulans (strain FGSC A4 / ATCC 38163 / CBS 112.46 / NRRL 194 / M139) (Aspergillus nidulans).